Reading from the N-terminus, the 200-residue chain is Molybdenum cofactor guanylyltransferase (200 aa).

GTP-binding positions include 10–12 (LAG), lysine 23, asparagine 51, aspartate 69, and aspartate 99. Aspartate 99 is a binding site for Mg(2+).

This sequence belongs to the MobA family. Monomer. It depends on Mg(2+) as a cofactor.

The protein resides in the cytoplasm. It carries out the reaction Mo-molybdopterin + GTP + H(+) = Mo-molybdopterin guanine dinucleotide + diphosphate. Its function is as follows. Transfers a GMP moiety from GTP to Mo-molybdopterin (Mo-MPT) cofactor (Moco or molybdenum cofactor) to form Mo-molybdopterin guanine dinucleotide (Mo-MGD) cofactor. The chain is Molybdenum cofactor guanylyltransferase from Shewanella halifaxensis (strain HAW-EB4).